The following is a 305-amino-acid chain: Serine/threonine-protein kinase 16 (305 aa).

G2 carries N-myristoyl glycine lipidation. Residues C6 and C8 are each lipidated (S-palmitoyl cysteine). Residues 20 to 293 (YLFIQKLGEG…PLLLSQLEAL (274 aa)) enclose the Protein kinase domain. Residues 26-34 (LGEGGFSYV) and K49 contribute to the ATP site. The Proton acceptor role is filled by D148. The activation loop stretch occupies residues 166 to 202 (DLGSMNQACIHVEGSRQALTLQDWAAQRCTISYRAPE). The residue at position 185 (T185) is a Phosphothreonine; by autocatalysis. At S197 the chain carries Phosphoserine; by autocatalysis. The residue at position 198 (Y198) is a Phosphotyrosine; by autocatalysis.

The protein belongs to the protein kinase superfamily. Ser/Thr protein kinase family. As to quaternary structure, monomer. Interacts with DRG1 (via its N-terminal); the interaction phosphorylates DRG1. In terms of processing, mainly autophosphorylated on serine/threonine residues. Also autophosphorylated on Tyr-198. It is uncertain whether palmitoylation is on Cys-6 and/or Cys-8. Ubiquitously expressed at very low levels.

The protein resides in the cytoplasm. The protein localises to the perinuclear region. It is found in the membrane. The catalysed reaction is L-seryl-[protein] + ATP = O-phospho-L-seryl-[protein] + ADP + H(+). It carries out the reaction L-threonyl-[protein] + ATP = O-phospho-L-threonyl-[protein] + ADP + H(+). The enzyme catalyses L-tyrosyl-[protein] + ATP = O-phospho-L-tyrosyl-[protein] + ADP + H(+). Membrane-associated protein kinase that phosphorylates on serine and threonine residues. In vitro substrates include DRG1, ENO1 and EIF4EBP1. Also autophosphorylates. May be involved in secretory vesicle trafficking or intracellular signaling. May have a role in regulating stromal-epithelial interactions that occur during ductal morphogenesis in the mammary gland. May be involved in TGF-beta signaling. Able to autophosphorylate on Tyr residue; it is however unclear whether it has tyrosine-protein kinase toward other proteins. The polypeptide is Serine/threonine-protein kinase 16 (STK16) (Homo sapiens (Human)).